We begin with the raw amino-acid sequence, 79 residues long: Morintide mO1 (79 aa).

The N-terminal stretch at 1–20 (MAKLSFLSLFLLCLVATATA) is a signal peptide. The Chitin-binding type-1 domain occupies 21–63 (QNCGRQAGNRACANQLCCSQYGFCGSTSEYCSRANGCQSNCRG). 4 cysteine pairs are disulfide-bonded: C23/C38, C32/C44, C37/C51, and C57/C61. A propeptide spanning residues 64–79 (GGGADGAGGEAGGGGP) is cleaved from the precursor.

Leaves (at protein level).

Its function is as follows. Chitin-binding protein which functions in defense against chitin-containing fungal pathogens. Inhibits the growth of budding hyphae in A.alternata and A.brassiciola. In Moringa oleifera (Horseradish tree), this protein is Morintide mO1.